A 187-amino-acid polypeptide reads, in one-letter code: Peptidyl-tRNA hydrolase (187 aa).

TRNA is bound at residue Tyr-15. Catalysis depends on His-20, which acts as the Proton acceptor. Positions 64, 66, and 112 each coordinate tRNA.

The protein belongs to the PTH family. As to quaternary structure, monomer.

It localises to the cytoplasm. It carries out the reaction an N-acyl-L-alpha-aminoacyl-tRNA + H2O = an N-acyl-L-amino acid + a tRNA + H(+). Hydrolyzes ribosome-free peptidyl-tRNAs (with 1 or more amino acids incorporated), which drop off the ribosome during protein synthesis, or as a result of ribosome stalling. Functionally, catalyzes the release of premature peptidyl moieties from peptidyl-tRNA molecules trapped in stalled 50S ribosomal subunits, and thus maintains levels of free tRNAs and 50S ribosomes. The protein is Peptidyl-tRNA hydrolase of Parabacteroides distasonis (strain ATCC 8503 / DSM 20701 / CIP 104284 / JCM 5825 / NCTC 11152).